Reading from the N-terminus, the 394-residue chain is Putative serine protease HhoA (394 aa).

Residues 1–24 (MKYPTWLRRIGGYLLAFAVGTAFG) form the signal peptide. Residues 293 to 377 (MMNITVDQAQ…ALKLDLLRGD (85 aa)) enclose the PDZ domain.

This sequence belongs to the peptidase S1C family.

It localises to the periplasm. A putative protease, its function overlaps that of the related putative proteases HhoB and HtrA. This chain is Putative serine protease HhoA (hhoA), found in Synechocystis sp. (strain ATCC 27184 / PCC 6803 / Kazusa).